Reading from the N-terminus, the 166-residue chain is Peptide methionine sulfoxide reductase MsrA (166 aa).

Cys-11 is an active-site residue.

It belongs to the MsrA Met sulfoxide reductase family.

The catalysed reaction is L-methionyl-[protein] + [thioredoxin]-disulfide + H2O = L-methionyl-(S)-S-oxide-[protein] + [thioredoxin]-dithiol. It catalyses the reaction [thioredoxin]-disulfide + L-methionine + H2O = L-methionine (S)-S-oxide + [thioredoxin]-dithiol. Its function is as follows. Has an important function as a repair enzyme for proteins that have been inactivated by oxidation. Catalyzes the reversible oxidation-reduction of methionine sulfoxide in proteins to methionine. In Mycoplasmopsis pulmonis (strain UAB CTIP) (Mycoplasma pulmonis), this protein is Peptide methionine sulfoxide reductase MsrA.